A 158-amino-acid chain; its full sequence is Urease accessory protein UreE (158 aa).

Belongs to the UreE family.

The protein resides in the cytoplasm. In terms of biological role, involved in urease metallocenter assembly. Binds nickel. Probably functions as a nickel donor during metallocenter assembly. In Klebsiella pneumoniae (strain 342), this protein is Urease accessory protein UreE.